The following is an 80-amino-acid chain: Small ribosomal subunit protein bS16 (80 aa).

The protein belongs to the bacterial ribosomal protein bS16 family.

The chain is Small ribosomal subunit protein bS16 from Hydrogenovibrio crunogenus (strain DSM 25203 / XCL-2) (Thiomicrospira crunogena).